We begin with the raw amino-acid sequence, 699 residues long: Elongation factor G (699 aa).

The tr-type G domain maps to 8-283 (EHIRNIGICA…AIVDFLPSPI (276 aa)). GTP-binding positions include 17–24 (AHIDAGKT), 81–85 (DTPGH), and 135–138 (NKMD).

It belongs to the TRAFAC class translation factor GTPase superfamily. Classic translation factor GTPase family. EF-G/EF-2 subfamily.

It is found in the cytoplasm. In terms of biological role, catalyzes the GTP-dependent ribosomal translocation step during translation elongation. During this step, the ribosome changes from the pre-translocational (PRE) to the post-translocational (POST) state as the newly formed A-site-bound peptidyl-tRNA and P-site-bound deacylated tRNA move to the P and E sites, respectively. Catalyzes the coordinated movement of the two tRNA molecules, the mRNA and conformational changes in the ribosome. The chain is Elongation factor G from Rickettsia typhi (strain ATCC VR-144 / Wilmington).